The primary structure comprises 185 residues: dCTP deaminase (185 aa).

Residues 107-112, 131-133, Gln152, Tyr166, and Gln176 contribute to the dCTP site; these read KSTYAR and TLE. Glu133 acts as the Proton donor/acceptor in catalysis.

Belongs to the dCTP deaminase family. As to quaternary structure, homotrimer.

The enzyme catalyses dCTP + H2O + H(+) = dUTP + NH4(+). It participates in pyrimidine metabolism; dUMP biosynthesis; dUMP from dCTP (dUTP route): step 1/2. In terms of biological role, catalyzes the deamination of dCTP to dUTP. The sequence is that of dCTP deaminase from Wolbachia sp. subsp. Brugia malayi (strain TRS).